The chain runs to 329 residues: Phenylalanine--tRNA ligase alpha subunit (329 aa).

Glu-254 lines the Mg(2+) pocket.

It belongs to the class-II aminoacyl-tRNA synthetase family. Phe-tRNA synthetase alpha subunit type 1 subfamily. In terms of assembly, tetramer of two alpha and two beta subunits. The cofactor is Mg(2+).

The protein localises to the cytoplasm. It catalyses the reaction tRNA(Phe) + L-phenylalanine + ATP = L-phenylalanyl-tRNA(Phe) + AMP + diphosphate + H(+). The polypeptide is Phenylalanine--tRNA ligase alpha subunit (Histophilus somni (strain 2336) (Haemophilus somnus)).